We begin with the raw amino-acid sequence, 555 residues long: Glutamate--tRNA ligase (555 aa).

Residues 100–110 (PNPSGPLHIGH) carry the 'HIGH' region motif.

The protein belongs to the class-I aminoacyl-tRNA synthetase family. Glutamate--tRNA ligase type 2 subfamily.

The protein resides in the cytoplasm. It carries out the reaction tRNA(Glu) + L-glutamate + ATP = L-glutamyl-tRNA(Glu) + AMP + diphosphate. Its function is as follows. Catalyzes the attachment of glutamate to tRNA(Glu) in a two-step reaction: glutamate is first activated by ATP to form Glu-AMP and then transferred to the acceptor end of tRNA(Glu). The polypeptide is Glutamate--tRNA ligase (Methanococcus maripaludis (strain C7 / ATCC BAA-1331)).